A 26-amino-acid chain; its full sequence is Aralin B chain (26 aa).

As to quaternary structure, disulfide-linked dimer of A and B chains. Glycosylated. High-mannose type oligosaccharides.

Its function is as follows. Lectin specific for galactose (Gal) and its derivatives. Induces apoptosis. Has cytotoxic activity against several human cancer cell lines. Is less cytotoxic to normal human cells. In Aralia elata (Japanese angelica tree), this protein is Aralin B chain.